A 110-amino-acid polypeptide reads, in one-letter code: Large ribosomal subunit protein uL22 (110 aa).

This sequence belongs to the universal ribosomal protein uL22 family. In terms of assembly, part of the 50S ribosomal subunit.

This protein binds specifically to 23S rRNA; its binding is stimulated by other ribosomal proteins, e.g. L4, L17, and L20. It is important during the early stages of 50S assembly. It makes multiple contacts with different domains of the 23S rRNA in the assembled 50S subunit and ribosome. In terms of biological role, the globular domain of the protein is located near the polypeptide exit tunnel on the outside of the subunit, while an extended beta-hairpin is found that lines the wall of the exit tunnel in the center of the 70S ribosome. The protein is Large ribosomal subunit protein uL22 of Chromohalobacter salexigens (strain ATCC BAA-138 / DSM 3043 / CIP 106854 / NCIMB 13768 / 1H11).